The chain runs to 666 residues: Pentatricopeptide repeat-containing protein At1g64100 (666 aa).

PPR repeat units lie at residues 105–139 (TAVD…RIPL), 140–174 (NIYS…GFQP), 175–209 (DVVT…GFLE), 225–259 (VVIT…GLHI), 260–294 (DVVT…HIKP), 295–329 (DVVI…GIAP), 330–364 (NVFT…EINP), 365–399 (DVLT…CIFP), 400–430 (DTVT…MASP), 431–465 (DVVT…GLVA), 466–500 (NTTT…GVCP), 501–535 (DTIT…KIDL), 536–570 (DTVA…GVEP), 571–605 (DVQT…GHEP), and 606–640 (DNST…GFSG).

It belongs to the PPR family. P subfamily.

This is Pentatricopeptide repeat-containing protein At1g64100 from Arabidopsis thaliana (Mouse-ear cress).